A 310-amino-acid chain; its full sequence is Alpha/beta hydrolase domain-containing protein 17A (310 aa).

The segment at 38 to 61 is disordered; it reads VPEPEPGPGGAGAAPSGPLRTSAA. Residues Ser-190, Asp-255, and His-284 each act as charge relay system in the active site. A Phosphoserine modification is found at Ser-307.

Belongs to the AB hydrolase superfamily. ABHD17 family. Palmitoylated on cysteine residues located in a cysteine cluster at the N-terminus which promotes membrane localization. Palmitoylation is required for post-synaptic localization and for depalmitoylating activity towards DLG4/PSD95.

It is found in the cell membrane. Its subcellular location is the endosome membrane. It localises to the cell projection. The protein localises to the dendritic spine. The protein resides in the postsynaptic density membrane. It catalyses the reaction S-hexadecanoyl-L-cysteinyl-[protein] + H2O = L-cysteinyl-[protein] + hexadecanoate + H(+). In terms of biological role, hydrolyzes fatty acids from S-acylated cysteine residues in proteins. Has depalmitoylating activity towards NRAS. Has depalmitoylating activity towards DLG4/PSD95. May have depalmitoylating activity towars MAP6. The polypeptide is Alpha/beta hydrolase domain-containing protein 17A (Mus musculus (Mouse)).